Here is a 328-residue protein sequence, read N- to C-terminus: Phenylalanine--tRNA ligase alpha subunit (328 aa).

Glutamate 253 contacts Mg(2+).

Belongs to the class-II aminoacyl-tRNA synthetase family. Phe-tRNA synthetase alpha subunit type 1 subfamily. In terms of assembly, tetramer of two alpha and two beta subunits. Mg(2+) serves as cofactor.

The protein localises to the cytoplasm. It catalyses the reaction tRNA(Phe) + L-phenylalanine + ATP = L-phenylalanyl-tRNA(Phe) + AMP + diphosphate + H(+). The sequence is that of Phenylalanine--tRNA ligase alpha subunit from Chromobacterium violaceum (strain ATCC 12472 / DSM 30191 / JCM 1249 / CCUG 213 / NBRC 12614 / NCIMB 9131 / NCTC 9757 / MK).